Reading from the N-terminus, the 317-residue chain is Probable deoxyhypusine synthase 1 (317 aa).

The Nucleophile role is filled by Lys285.

This sequence belongs to the deoxyhypusine synthase family. Requires NAD(+) as cofactor.

It catalyses the reaction [eIF5A protein]-L-lysine + spermidine = [eIF5A protein]-deoxyhypusine + propane-1,3-diamine. Its pathway is protein modification; eIF5A hypusination. Functionally, catalyzes the NAD-dependent oxidative cleavage of spermidine and the subsequent transfer of the butylamine moiety of spermidine to the epsilon-amino group of a specific lysine residue of the eIF-5A precursor protein to form the intermediate deoxyhypusine residue. The sequence is that of Probable deoxyhypusine synthase 1 (dys1) from Methanosarcina mazei (strain ATCC BAA-159 / DSM 3647 / Goe1 / Go1 / JCM 11833 / OCM 88) (Methanosarcina frisia).